The primary structure comprises 109 residues: Somatostatin-2 (109 aa).

Residues 1–16 form the signal peptide; that stretch reads MQFLASLVSFLLVVWS. Positions 17–80 are excised as a propeptide; sequence VKATALPVED…EPLENKLEER (64 aa). The cysteines at positions 98 and 109 are disulfide-linked.

Belongs to the somatostatin family.

It localises to the secreted. Functionally, somatostatin inhibits the release of somatotropin. The sequence is that of Somatostatin-2 (sst2) from Protopterus annectens (African lungfish).